Here is a 182-residue protein sequence, read N- to C-terminus: Thioredoxin X, chloroplastic (182 aa).

Residues methionine 1–arginine 67 constitute a chloroplast transit peptide. Residues cysteine 68–asparagine 177 enclose the Thioredoxin domain. Catalysis depends on nucleophile residues cysteine 99 and cysteine 102. Cysteine 99 and cysteine 102 are joined by a disulfide.

This sequence belongs to the thioredoxin family. In terms of tissue distribution, predominantly expressed in leaves.

The protein resides in the plastid. Its subcellular location is the chloroplast stroma. Its function is as follows. Probable thiol-disulfide oxidoreductase that may participate in various redox reactions. The polypeptide is Thioredoxin X, chloroplastic (ATHX) (Arabidopsis thaliana (Mouse-ear cress)).